The following is a 356-amino-acid chain: Histidinol-phosphate aminotransferase (356 aa).

An N6-(pyridoxal phosphate)lysine modification is found at Lys214.

The protein belongs to the class-II pyridoxal-phosphate-dependent aminotransferase family. Histidinol-phosphate aminotransferase subfamily. In terms of assembly, homodimer. Pyridoxal 5'-phosphate is required as a cofactor.

It carries out the reaction L-histidinol phosphate + 2-oxoglutarate = 3-(imidazol-4-yl)-2-oxopropyl phosphate + L-glutamate. Its pathway is amino-acid biosynthesis; L-histidine biosynthesis; L-histidine from 5-phospho-alpha-D-ribose 1-diphosphate: step 7/9. This Shigella boydii serotype 18 (strain CDC 3083-94 / BS512) protein is Histidinol-phosphate aminotransferase.